The primary structure comprises 357 residues: Holliday junction branch migration complex subunit RuvB (357 aa).

Residues 1–20 (MDDHDDSPVSPSFLKSDGEI) are disordered. The interval 1–185 (MDDHDDSPVS…FGFTGHMDFY (185 aa)) is large ATPase domain (RuvB-L). Residues leucine 24, arginine 25, glycine 66, lysine 69, threonine 70, serine 71, 132–134 (EDF), arginine 175, tyrosine 185, and arginine 222 each bind ATP. Position 70 (threonine 70) interacts with Mg(2+). A small ATPAse domain (RuvB-S) region spans residues 186–256 (EPGELLRILE…VARAALEVYD (71 aa)). Positions 259 to 357 (TLGLDRLDRA…TSQPTLDLFD (99 aa)) are head domain (RuvB-H). Positions 314 and 319 each coordinate DNA.

It belongs to the RuvB family. In terms of assembly, homohexamer. Forms an RuvA(8)-RuvB(12)-Holliday junction (HJ) complex. HJ DNA is sandwiched between 2 RuvA tetramers; dsDNA enters through RuvA and exits via RuvB. An RuvB hexamer assembles on each DNA strand where it exits the tetramer. Each RuvB hexamer is contacted by two RuvA subunits (via domain III) on 2 adjacent RuvB subunits; this complex drives branch migration. In the full resolvosome a probable DNA-RuvA(4)-RuvB(12)-RuvC(2) complex forms which resolves the HJ.

It localises to the cytoplasm. It carries out the reaction ATP + H2O = ADP + phosphate + H(+). In terms of biological role, the RuvA-RuvB-RuvC complex processes Holliday junction (HJ) DNA during genetic recombination and DNA repair, while the RuvA-RuvB complex plays an important role in the rescue of blocked DNA replication forks via replication fork reversal (RFR). RuvA specifically binds to HJ cruciform DNA, conferring on it an open structure. The RuvB hexamer acts as an ATP-dependent pump, pulling dsDNA into and through the RuvAB complex. RuvB forms 2 homohexamers on either side of HJ DNA bound by 1 or 2 RuvA tetramers; 4 subunits per hexamer contact DNA at a time. Coordinated motions by a converter formed by DNA-disengaged RuvB subunits stimulates ATP hydrolysis and nucleotide exchange. Immobilization of the converter enables RuvB to convert the ATP-contained energy into a lever motion, pulling 2 nucleotides of DNA out of the RuvA tetramer per ATP hydrolyzed, thus driving DNA branch migration. The RuvB motors rotate together with the DNA substrate, which together with the progressing nucleotide cycle form the mechanistic basis for DNA recombination by continuous HJ branch migration. Branch migration allows RuvC to scan DNA until it finds its consensus sequence, where it cleaves and resolves cruciform DNA. This Nocardia farcinica (strain IFM 10152) protein is Holliday junction branch migration complex subunit RuvB.